The sequence spans 298 residues: MEEFDSEDFSTSEEDEDYVPSGGEYSEDDINELVKEDEVDGEEETQKTKGTKRKAESVLARKRKQGGLSLEEEGEEDANEESGGSSSEEEDAATGQEKGIESEDARKKKEDELWASFLNDVGPKSKVPPSTHVKTGEETEETSSSHLVKAEKLEKPQETEKVKITKVFDFAGEEVRVIKEVDATSKEAKSFFKQNEKEKPQSNISSSVPSLSAGSGLKRSSGMSSLLGKIGAKKQKMSTLEKSKLDWESFKEEEGIGEELAIHNRGKEGYIERKAFLDRVDHRQFEIERDLRLSQMKP.

Acidic residues-rich tracts occupy residues 1-18, 25-43, and 70-80; these read MEEF…DEDY, YSED…DGEE, and LEEEGEEDANE. Disordered stretches follow at residues 1-158 and 191-223; these read MEEF…KPQE and FFKQ…SSGM. Serine 82, serine 85, and serine 86 each carry phosphoserine. Positions 98–112 are enriched in basic and acidic residues; the sequence is KGIESEDARKKKEDE. Serine 116 carries the phosphoserine modification. 2 stretches are compositionally biased toward basic and acidic residues: residues 148–158 and 191–200; these read VKAEKLEKPQE and FFKQNEKEKP. Lysine 149 participates in a covalent cross-link: Glycyl lysine isopeptide (Lys-Gly) (interchain with G-Cter in SUMO2). Residues 177–216 form a hydrophilic region; that stretch reads VIKEVDATSKEAKSFFKQNEKEKPQSNISSSVPSLSAGSG. Residues 205-217 show a composition bias toward low complexity; the sequence is SSSVPSLSAGSGL. The residue at position 215 (serine 215) is a Phosphoserine. In terms of domain architecture, BCNT-C spans 217–298; it reads LKRSSGMSSL…RDLRLSQMKP (82 aa). An N6-methyllysine modification is found at lysine 218. Position 249 is a phosphoserine (serine 249).

The protein localises to the chromosome. It is found in the centromere. It localises to the kinetochore. Its function is as follows. May play a role during embryogenesis. In Muntiacus reevesi (Reeves' muntjac), this protein is Craniofacial development protein 1 (CFDP1).